Reading from the N-terminus, the 290-residue chain is Protease HtpX (290 aa).

Transmembrane regions (helical) follow at residues 4-24 (IFLF…TLKL) and 36-56 (GSLL…SLFI). H142 provides a ligand contact to Zn(2+). E143 is an active-site residue. H146 contacts Zn(2+). Transmembrane regions (helical) follow at residues 150–170 (GDMV…MFFA) and 193–213 (FVAT…IVMW). A Zn(2+)-binding site is contributed by E219.

It belongs to the peptidase M48B family. Requires Zn(2+) as cofactor.

The protein resides in the cell inner membrane. This chain is Protease HtpX, found in Stutzerimonas stutzeri (strain A1501) (Pseudomonas stutzeri).